We begin with the raw amino-acid sequence, 517 residues long: Peptide chain release factor 3 (517 aa).

One can recognise a tr-type G domain in the interval 9–269 (AKRRTFAIIS…DFVEHAPAPR (261 aa)). Residues 18–25 (SHPDAGKT), 86–90 (DTPGH), and 140–143 (NKLD) contribute to the GTP site.

The protein belongs to the TRAFAC class translation factor GTPase superfamily. Classic translation factor GTPase family. PrfC subfamily.

Its subcellular location is the cytoplasm. Increases the formation of ribosomal termination complexes and stimulates activities of RF-1 and RF-2. It binds guanine nucleotides and has strong preference for UGA stop codons. It may interact directly with the ribosome. The stimulation of RF-1 and RF-2 is significantly reduced by GTP and GDP, but not by GMP. The polypeptide is Peptide chain release factor 3 (Halorhodospira halophila (strain DSM 244 / SL1) (Ectothiorhodospira halophila (strain DSM 244 / SL1))).